The following is a 146-amino-acid chain: Chorion class A protein Ld3/Ld29 (146 aa).

The signal sequence occupies residues 1 to 21; it reads MNTFALLSVFIQACLVQSVFS.

The protein belongs to the chorion protein family.

Functionally, this protein is one of many from the eggshell of the gypsy moth. This chain is Chorion class A protein Ld3/Ld29, found in Lymantria dispar (Gypsy moth).